Consider the following 157-residue polypeptide: Endoribonuclease YbeY (157 aa).

The Zn(2+) site is built by H114, H118, and H124.

Belongs to the endoribonuclease YbeY family. It depends on Zn(2+) as a cofactor.

Its subcellular location is the cytoplasm. Single strand-specific metallo-endoribonuclease involved in late-stage 70S ribosome quality control and in maturation of the 3' terminus of the 16S rRNA. This is Endoribonuclease YbeY from Serratia proteamaculans (strain 568).